Consider the following 78-residue polypeptide: Defensin-like protein 173 (78 aa).

The N-terminal stretch at 1 to 23 (MAKAPSPLVFPIIFLIIFALVEP) is a signal peptide. Intrachain disulfides connect Cys-27–Cys-71, Cys-34–Cys-56, Cys-40–Cys-65, and Cys-44–Cys-67.

Belongs to the DEFL family.

The protein resides in the secreted. This Arabidopsis thaliana (Mouse-ear cress) protein is Defensin-like protein 173 (LCR63).